Reading from the N-terminus, the 200-residue chain is Probable GTP-binding protein EngB (200 aa).

Positions 26 to 200 (SIPEVALAGR…IYEIAQCIKK (175 aa)) constitute an EngB-type G domain. GTP is bound by residues 34–41 (GRSNVGKS), 61–65 (GCTRQ), 80–83 (DLPG), 147–150 (TKID), and 179–181 (VSS). The Mg(2+) site is built by serine 41 and threonine 63.

The protein belongs to the TRAFAC class TrmE-Era-EngA-EngB-Septin-like GTPase superfamily. EngB GTPase family. Requires Mg(2+) as cofactor.

Functionally, necessary for normal cell division and for the maintenance of normal septation. In Ehrlichia ruminantium (strain Welgevonden), this protein is Probable GTP-binding protein EngB.